The following is a 180-amino-acid chain: Flavin prenyltransferase UbiX (180 aa).

FMN contacts are provided by residues 9 to 11 (GAS), serine 33, 84 to 87 (SITT), and arginine 119. Dimethylallyl phosphate-binding residues include tyrosine 149 and arginine 165.

It belongs to the UbiX/PAD1 family.

The catalysed reaction is dimethylallyl phosphate + FMNH2 = prenylated FMNH2 + phosphate. Functionally, flavin prenyltransferase that catalyzes the synthesis of the prenylated FMN cofactor (prenyl-FMN) for 4-hydroxy-3-polyprenylbenzoic acid decarboxylase UbiD. The prenyltransferase is metal-independent and links a dimethylallyl moiety from dimethylallyl monophosphate (DMAP) to the flavin N5 and C6 atoms of FMN. This is Flavin prenyltransferase UbiX from Thermoplasma acidophilum (strain ATCC 25905 / DSM 1728 / JCM 9062 / NBRC 15155 / AMRC-C165).